A 580-amino-acid polypeptide reads, in one-letter code: Serine/threonine-protein kinase PINK1, mitochondrial (580 aa).

Residues 1-77 (MAVRQALGRG…RFFRQSVAGL (77 aa)) constitute a mitochondrion transit peptide. The Mitochondrial intermembrane portion of the chain corresponds to 78–93 (AARIQRQFMVRARGGA). The helical transmembrane segment at 94 to 110 (GPCGRAVFLAFGLGLGL) threads the bilayer. A required for outer membrane localization region spans residues 111 to 117 (IEEKQAE). Residues 111 to 580 (IEEKQAEGRR…LLLSSWRAAP (470 aa)) lie on the Cytoplasmic side of the membrane. A Protein kinase domain is found at 156 to 510 (YLIGQAIGKG…LAANVLHLSL (355 aa)). Residues 162–170 (IGKGCNAAV) and Lys186 contribute to the ATP site. Ser227 is modified (phosphoserine; by autocatalysis). Asp361 serves as the catalytic Proton acceptor. Ser401 carries the post-translational modification Phosphoserine; by autocatalysis.

It belongs to the protein kinase superfamily. Ser/Thr protein kinase family. As to quaternary structure, upon mitochondrial depolarization, it forms a supercomplex with TOM and TIM23 complexes. PINK1-TOM-TIM23 supercomplex formation requires PINK1 interaction with TOMM20 and TOMM70 and is critical for PINK1 stabilization at the outer mitochondrial membrane, kinase activation and downstream mitophagy. Upon mitochondrial depolarization, interacts with TIMM23; the interaction is required for PINK1 accumulation at the outer mitochondrial membrane, kinase activation by autophosphorylation and PRKN recruitement to mitochondria. Interacts with PRKN. Interacts with FBXO7. Forms a complex with PRKN and PARK7. Interacts with NENF. Mg(2+) serves as cofactor. Post-translationally, proteolytically cleaved. In healthy cells, the precursor is continuously imported into the inner mitochondrial membrane (IMM), where it is proteolytically cleaved by mitochondrial-processing peptidase (MPP) and then undergoes further proteolytic cleavage by PARL or AFG3L2 to give rise to the 52 kDa short form. The 52 kDa short form is then released into the cytosol where it rapidly undergoes proteasome-dependent degradation. In unhealthy cells, when cellular stress conditions lead to the loss of mitochondrial membrane potential, mitochondrial import is impaired leading to the precursor accumulating on the outer mitochondrial membrane (OMM). If accumulation at the OMM fails and it is imported into the depolarized mitochondria, it undergoes cleavage by the IMM protease OMA1, promoting its subsequent degradation by the proteasome. Autophosphorylated. Loss of mitochondrial membrane potential results in the precursor accumulating on the outer mitochondrial membrane (OMM) where it is activated by autophosphorylation. Autophosphorylation at Ser-227 and Ser-401 is essential for selective recruitment of PRKN to depolarized mitochondria, via PINK1-dependent phosphorylation of ubiquitin and PRKN. As to expression, high levels expressed in testis, lower levels in brain, heart, lung, liver and kidney.

It localises to the mitochondrion outer membrane. The protein localises to the mitochondrion inner membrane. It is found in the cytoplasm. The protein resides in the cytosol. It carries out the reaction L-seryl-[protein] + ATP = O-phospho-L-seryl-[protein] + ADP + H(+). It catalyses the reaction L-threonyl-[protein] + ATP = O-phospho-L-threonyl-[protein] + ADP + H(+). Functionally, serine/threonine-protein kinase which acts as a sensor of mitochondrial damage and protects against mitochondrial dysfunction during cellular stress. It phosphorylates mitochondrial proteins to coordinate mitochondrial quality control mechanisms that remove and replace dysfunctional mitochondrial components. Depending on the severity of mitochondrial damage, activity ranges from preventing apoptosis and stimulating mitochondrial biogenesis to eliminating severely damaged mitochondria via PINK1-PRKN-dependent mitophagy. When cellular stress results in irreversible mitochondrial damage, PINK1 accumulates at the outer mitochondrial membrane (OMM) where it phosphorylates pre-existing polyubiquitin chains at 'Ser-65', recruits PRKN from the cytosol to the OMM and activates PRKN by phosphorylation at 'Ser-65'. Activated PRKN then ubiquinates VDAC1 and other OMM proteins to initiate mitophagy. The PINK1-PRKN pathway also promotes fission of damaged mitochondria by phosphorylating and thus promoting the PRKN-dependent degradation of mitochondrial proteins involved in fission such as MFN2. This prevents the refusion of unhealthy mitochondria with the mitochondrial network or initiates mitochondrial fragmentation facilitating their later engulfment by autophagosomes. Also promotes mitochondrial fission independently of PRKN and ATG7-mediated mitophagy, via the phosphorylation and activation of DNM1L. Regulates motility of damaged mitochondria by promoting the ubiquitination and subsequent degradation of MIRO1 and MIRO2; in motor neurons, this likely inhibits mitochondrial intracellular anterograde transport along the axons which probably increases the chance of the mitochondria undergoing mitophagy in the soma. Required for ubiquinone reduction by mitochondrial complex I by mediating phosphorylation of complex I subunit NDUFA10. Phosphorylates LETM1, positively regulating its mitochondrial calcium transport activity. The protein is Serine/threonine-protein kinase PINK1, mitochondrial (Pink1) of Mus musculus (Mouse).